A 4334-amino-acid polypeptide reads, in one-letter code: Cytoplasmic dynein 2 heavy chain 1 (4334 aa).

Residues 1-1704 (MSSDSRKTFV…KVAMAEATFD (1704 aa)) form a stem region. 150–157 (LGTAVRKG) serves as a coordination point for ATP. A coiled-coil region spans residues 1026-1097 (QEAKGLTAKL…AHLEEQKGNL (72 aa)). AAA stretches follow at residues 1705–1929 (YTWE…VLGI), 1996–2211 (KALA…KAFQ), 2299–2544 (GMDE…WING), and 2641–2882 (GYER…SSGS). ATP contacts are provided by residues 1743 to 1750 (GPAGTGKT), 2034 to 2041 (GPSGSGKS), 2334 to 2341 (GPEGCGKG), and 2679 to 2686 (GNSGVGRR). The stalk stretch occupies residues 2897-3185 (QIYNRKRTQV…ISVDKAESVL (289 aa)). Coiled coils occupy residues 2930 to 2998 (LSAE…SEVQ) and 3120 to 3199 (ERVS…RGEK). 2 AAA regions span residues 3260-3492 (LSSE…TVEK) and 3701-3917 (MSSF…VITL).

This sequence belongs to the dynein heavy chain family. As to quaternary structure, the cytoplasmic dynein complex 2 is probably composed by a DHC1B homodimer and a number of D1BLIC light intermediate chains. Interacts with FAP133, FLA10 and LC8.

The protein localises to the cytoplasm. It is found in the cytoskeleton. It localises to the flagellum basal body. Its subcellular location is the cell projection. The protein resides in the cilium. The protein localises to the flagellum membrane. May function as a motor for intraflagellar retrograde transport. Functions in flagellar biogenesis. In Chlamydomonas reinhardtii (Chlamydomonas smithii), this protein is Cytoplasmic dynein 2 heavy chain 1 (DHC1B).